A 473-amino-acid polypeptide reads, in one-letter code: Sulfate adenylyltransferase subunit 1 (473 aa).

Positions 19–238 (KTLLKFLTCG…IKIKNSISSE (220 aa)) constitute a tr-type G domain. The segment at 28-35 (GSVDDGKS) is G1. 28–35 (GSVDDGKS) is a binding site for GTP. A G2 region spans residues 86–90 (GITID). The interval 107-110 (DTPG) is G3. GTP is bound by residues 107-111 (DTPGH) and 162-165 (NKMD). Residues 162–165 (NKMD) form a G4 region. The segment at 200 to 202 (SAL) is G5.

It belongs to the TRAFAC class translation factor GTPase superfamily. Classic translation factor GTPase family. CysN/NodQ subfamily. Heterodimer composed of CysD, the smaller subunit, and CysN.

It carries out the reaction sulfate + ATP + H(+) = adenosine 5'-phosphosulfate + diphosphate. It participates in sulfur metabolism; hydrogen sulfide biosynthesis; sulfite from sulfate: step 1/3. With CysD forms the ATP sulfurylase (ATPS) that catalyzes the adenylation of sulfate producing adenosine 5'-phosphosulfate (APS) and diphosphate, the first enzymatic step in sulfur assimilation pathway. APS synthesis involves the formation of a high-energy phosphoric-sulfuric acid anhydride bond driven by GTP hydrolysis by CysN coupled to ATP hydrolysis by CysD. The polypeptide is Sulfate adenylyltransferase subunit 1 (Buchnera aphidicola subsp. Acyrthosiphon pisum (strain APS) (Acyrthosiphon pisum symbiotic bacterium)).